The chain runs to 114 residues: Large ribosomal subunit protein uL24 (114 aa).

This sequence belongs to the universal ribosomal protein uL24 family. As to quaternary structure, part of the 50S ribosomal subunit.

One of two assembly initiator proteins, it binds directly to the 5'-end of the 23S rRNA, where it nucleates assembly of the 50S subunit. Functionally, one of the proteins that surrounds the polypeptide exit tunnel on the outside of the subunit. The protein is Large ribosomal subunit protein uL24 of Acidothermus cellulolyticus (strain ATCC 43068 / DSM 8971 / 11B).